A 173-amino-acid chain; its full sequence is Crossover junction endodeoxyribonuclease RuvC (173 aa).

Residues D11, E71, and D143 contribute to the active site. Residues D11, E71, and D143 each coordinate Mg(2+).

The protein belongs to the RuvC family. As to quaternary structure, homodimer which binds Holliday junction (HJ) DNA. The HJ becomes 2-fold symmetrical on binding to RuvC with unstacked arms; it has a different conformation from HJ DNA in complex with RuvA. In the full resolvosome a probable DNA-RuvA(4)-RuvB(12)-RuvC(2) complex forms which resolves the HJ. Mg(2+) serves as cofactor.

The protein localises to the cytoplasm. It catalyses the reaction Endonucleolytic cleavage at a junction such as a reciprocal single-stranded crossover between two homologous DNA duplexes (Holliday junction).. In terms of biological role, the RuvA-RuvB-RuvC complex processes Holliday junction (HJ) DNA during genetic recombination and DNA repair. Endonuclease that resolves HJ intermediates. Cleaves cruciform DNA by making single-stranded nicks across the HJ at symmetrical positions within the homologous arms, yielding a 5'-phosphate and a 3'-hydroxyl group; requires a central core of homology in the junction. The consensus cleavage sequence is 5'-(A/T)TT(C/G)-3'. Cleavage occurs on the 3'-side of the TT dinucleotide at the point of strand exchange. HJ branch migration catalyzed by RuvA-RuvB allows RuvC to scan DNA until it finds its consensus sequence, where it cleaves and resolves the cruciform DNA. In Brucella abortus (strain 2308), this protein is Crossover junction endodeoxyribonuclease RuvC.